A 128-amino-acid chain; its full sequence is Cytochrome c' (128 aa).

Heme c is bound by residues Q13, Q17, E69, T70, C118, C121, and H122.

In terms of assembly, homodimer. In terms of processing, binds 1 heme c group covalently per subunit.

Functionally, cytochrome c' is the most widely occurring bacterial c-type cytochrome. Cytochromes c' are high-spin proteins and the heme has no sixth ligand. Their exact function is not known. This chain is Cytochrome c', found in Magnetospirillum molischianum (Rhodospirillum molischianum).